Reading from the N-terminus, the 132-residue chain is Small ribosomal subunit protein uS8 (132 aa).

This sequence belongs to the universal ribosomal protein uS8 family. As to quaternary structure, part of the 30S ribosomal subunit. Contacts proteins S5 and S12.

Its function is as follows. One of the primary rRNA binding proteins, it binds directly to 16S rRNA central domain where it helps coordinate assembly of the platform of the 30S subunit. The chain is Small ribosomal subunit protein uS8 from Nocardia farcinica (strain IFM 10152).